Consider the following 208-residue polypeptide: Ras-related protein Rab-6A (208 aa).

S2 carries the N-acetylserine modification. Positions 23, 24, 25, 26, 27, 28, 39, 40, 42, and 45 each coordinate GTP. T27 contributes to the Mg(2+) binding site. Residues 32–50 (RFMYDSFDNTYQATIGIDF) carry the Switch 1 motif. Mg(2+)-binding residues include T45 and D68. Residues 69-88 (TAGQERFRSLIPSYIRDSTV) carry the Switch 2 motif. G71, N126, K127, D129, S156, A157, and K158 together coordinate GTP. Position 184 is a phosphoserine (S184). 2 S-geranylgeranyl cysteine lipidation sites follow: C206 and C208. C208 carries the post-translational modification Cysteine methyl ester.

This sequence belongs to the small GTPase superfamily. Rab family. As to quaternary structure, interacts with BICDL1; leads to its accumulation in the pericentrosomal region. Interacts with SCYL1BP1. Interacts with VSP52. Interacts with RABGAP1. Interacts with GCC2 (via its GRIP domain). Interacts with RAB6IP1 (via its RUN 1 domain). Interacts with TMF1. Interacts with CIMAP3. Interacts (GTP-bound) with APBA1/MINT1 isoform 3, also called Mint1_826, but not with isoform 1. Interacts with RIC1; the interaction is direct with a preference for RAB6A-GDP. Interacts with RGP1; the interaction is direct with a preference for RAB6A-GDP. Interacts (GTP-bound) with DYNLRB1; the interaction is direct. Interacts with BICD1. Interacts with BICD2; the interaction is direct. Interacts (GTP-bound) with VPS13B. In terms of assembly, interacts with BICD1. Interacts (GDP-bound) with DYNLRB1; the interaction is direct. Interacts (GTP-bound) with VPS13B. The cofactor is Mg(2+). Prenylated.

It is found in the golgi apparatus membrane. The protein localises to the cytoplasmic vesicle. It localises to the secretory vesicle. Its subcellular location is the acrosome membrane. The enzyme catalyses GTP + H2O = GDP + phosphate + H(+). Its activity is regulated as follows. Regulated by guanine nucleotide exchange factors (GEFs) which promote the exchange of bound GDP for free GTP. Regulated by GTPase activating proteins (GAPs) which increase the GTP hydrolysis activity. Inhibited by GDP dissociation inhibitors (GDIs). Functionally, the small GTPases Rab are key regulators of intracellular membrane trafficking, from the formation of transport vesicles to their fusion with membranes. Rabs cycle between an inactive GDP-bound form and an active GTP-bound form that is able to recruit to membranes different sets of downstream effectors directly responsible for vesicle formation, movement, tethering and fusion. RAB6A acts as a regulator of COPI-independent retrograde transport from the Golgi apparatus towards the endoplasmic reticulum (ER). Has a low GTPase activity. Recruits VPS13B to the Golgi membrane. Plays a role in neuron projection development. The protein is Ras-related protein Rab-6A of Mus musculus (Mouse).